Reading from the N-terminus, the 560-residue chain is Glutamate--tRNA ligase (560 aa).

The short motif at 108–118 (PNPSGPLHLGH) is the 'HIGH' region element.

This sequence belongs to the class-I aminoacyl-tRNA synthetase family. Glutamate--tRNA ligase type 2 subfamily.

Its subcellular location is the cytoplasm. The catalysed reaction is tRNA(Glu) + L-glutamate + ATP = L-glutamyl-tRNA(Glu) + AMP + diphosphate. Its function is as follows. Catalyzes the attachment of glutamate to tRNA(Glu) in a two-step reaction: glutamate is first activated by ATP to form Glu-AMP and then transferred to the acceptor end of tRNA(Glu). This is Glutamate--tRNA ligase from Methanocorpusculum labreanum (strain ATCC 43576 / DSM 4855 / Z).